Here is a 179-residue protein sequence, read N- to C-terminus: ATP-dependent protease subunit HslV (179 aa).

T7 is an active-site residue. Na(+) is bound by residues G162, C165, and T168.

The protein belongs to the peptidase T1B family. HslV subfamily. A double ring-shaped homohexamer of HslV is capped on each side by a ring-shaped HslU homohexamer. The assembly of the HslU/HslV complex is dependent on binding of ATP.

The protein resides in the cytoplasm. It carries out the reaction ATP-dependent cleavage of peptide bonds with broad specificity.. Allosterically activated by HslU binding. Functionally, protease subunit of a proteasome-like degradation complex believed to be a general protein degrading machinery. The protein is ATP-dependent protease subunit HslV of Bordetella petrii (strain ATCC BAA-461 / DSM 12804 / CCUG 43448).